A 529-amino-acid polypeptide reads, in one-letter code: UDP-glucuronosyltransferase 2B18 (529 aa).

The N-terminal stretch at 1 to 21 (MSVKWTSVILLIQLSFYFSSG) is a signal peptide. N67 and N68 each carry an N-linked (GlcNAc...) asparagine glycan. Residues 493–513 (VIGFLLACVATVIFIIMKCCL) form a helical membrane-spanning segment.

Belongs to the UDP-glycosyltransferase family. As to expression, expressed in liver, prostate, kidney, testis, adrenal, bile duct, bladder, colon, small intestine, cerebellum and pancreas.

It localises to the microsome membrane. The protein localises to the endoplasmic reticulum membrane. It carries out the reaction glucuronate acceptor + UDP-alpha-D-glucuronate = acceptor beta-D-glucuronoside + UDP + H(+). Its function is as follows. UDPGT is of major importance in the conjugation and subsequent elimination of potentially toxic xenobiotics and endogenous compounds. This isozyme displays activity toward 3-hydroxyandrogens. It is principally active on C19 steroids having a hydroxyl group at position 3-alpha of the steroid molecule and also active on planar phenols and bile acids. This Macaca fascicularis (Crab-eating macaque) protein is UDP-glucuronosyltransferase 2B18 (UGT2B18).